Consider the following 68-residue polypeptide: Copper transport protein ATOX1 (68 aa).

The HMA domain maps to 1–63; the sequence is MPKHEFSVDM…TLEKTGKAVS (63 aa). 2 residues coordinate Cu cation: cysteine 12 and cysteine 15. A Phosphoserine modification is found at serine 47. Lysine 60 bears the N6-acetyllysine mark.

The protein belongs to the ATX1 family. In terms of assembly, homodimer. Interacts with ATP7B. Interacts with ATP7A. Interacts (via dimer form) with SLC31A1 (via C-terminal domain); this interaction improves ATOX1 stability and controls intracellular Cu(I) levels.

In terms of biological role, binds and deliver cytosolic copper to the copper ATPase proteins. May be important in cellular antioxidant defense. This is Copper transport protein ATOX1 from Canis lupus familiaris (Dog).